The chain runs to 226 residues: Ribosomal RNA small subunit methyltransferase G (226 aa).

Residues glycine 95, leucine 100, 146–147 (VE), and arginine 159 each bind S-adenosyl-L-methionine.

Belongs to the methyltransferase superfamily. RNA methyltransferase RsmG family.

The protein resides in the cytoplasm. The enzyme catalyses guanosine(527) in 16S rRNA + S-adenosyl-L-methionine = N(7)-methylguanosine(527) in 16S rRNA + S-adenosyl-L-homocysteine. Its function is as follows. Specifically methylates the N7 position of guanine in position 527 of 16S rRNA. This is Ribosomal RNA small subunit methyltransferase G from Acidovorax ebreus (strain TPSY) (Diaphorobacter sp. (strain TPSY)).